The following is a 226-amino-acid chain: MKPEPQSEAELMERAQDIAGLSFAELAEEAGMTVPENLKRDKGWVGQLLEWHLGAPAGSKPQQDFAKLGIELKSIPIGYSGKPLETTFVSVAPLTGVQGLTWETSHVRNKLSRVLWVPVEGEREIPLAERRVGSPLIWSPDQEEEQILKNDWEELMELIVLGKFDQISARHGEALHLRPKAANAKALTEAYSSNGKPIKTLPRGFYLRTQFTEQILLKHYINAQSE.

Belongs to the MutH family.

It localises to the cytoplasm. In terms of biological role, sequence-specific endonuclease that cleaves unmethylated GATC sequences. It is involved in DNA mismatch repair. In Vibrio campbellii (strain ATCC BAA-1116), this protein is DNA mismatch repair protein MutH.